The primary structure comprises 265 residues: tRNA pseudouridine synthase A (265 aa).

The active-site Nucleophile is the aspartate 52. Tyrosine 105 serves as a coordination point for substrate.

It belongs to the tRNA pseudouridine synthase TruA family.

It catalyses the reaction uridine(38/39/40) in tRNA = pseudouridine(38/39/40) in tRNA. Its function is as follows. Formation of pseudouridine at positions 38, 39 and 40 in the anticodon stem and loop of transfer RNAs. This is tRNA pseudouridine synthase A from Archaeoglobus fulgidus (strain ATCC 49558 / DSM 4304 / JCM 9628 / NBRC 100126 / VC-16).